A 428-amino-acid polypeptide reads, in one-letter code: Putative oxidoreductase YteT (428 aa).

Positions 1-23 (MKNIVFCGLSSRAFSMFIKPLME) are cleaved as a signal peptide.

The protein belongs to the Gfo/Idh/MocA family.

Functionally, may play a role in the degradation of type I rhamnogalacturonan derived from plant cell walls. This Bacillus subtilis (strain 168) protein is Putative oxidoreductase YteT (yteT).